The chain runs to 70 residues: ATP synthase subunit c (70 aa).

Transmembrane regions (helical) follow at residues 3 to 23 (ALAAGIAMLAGLGVGIGIGIA) and 44 to 64 (LFLIGAALAEAVAIYSLVIAF).

It belongs to the ATPase C chain family. F-type ATPases have 2 components, F(1) - the catalytic core - and F(0) - the membrane proton channel. F(1) has five subunits: alpha(3), beta(3), gamma(1), delta(1), epsilon(1). F(0) has three main subunits: a(1), b(2) and c(10-14). The alpha and beta chains form an alternating ring which encloses part of the gamma chain. F(1) is attached to F(0) by a central stalk formed by the gamma and epsilon chains, while a peripheral stalk is formed by the delta and b chains.

The protein localises to the cell membrane. Functionally, f(1)F(0) ATP synthase produces ATP from ADP in the presence of a proton or sodium gradient. F-type ATPases consist of two structural domains, F(1) containing the extramembraneous catalytic core and F(0) containing the membrane proton channel, linked together by a central stalk and a peripheral stalk. During catalysis, ATP synthesis in the catalytic domain of F(1) is coupled via a rotary mechanism of the central stalk subunits to proton translocation. Its function is as follows. Key component of the F(0) channel; it plays a direct role in translocation across the membrane. A homomeric c-ring of between 10-14 subunits forms the central stalk rotor element with the F(1) delta and epsilon subunits. In Caldicellulosiruptor bescii (strain ATCC BAA-1888 / DSM 6725 / KCTC 15123 / Z-1320) (Anaerocellum thermophilum), this protein is ATP synthase subunit c.